Reading from the N-terminus, the 260-residue chain is Global transcriptional regulator CodY (260 aa).

Positions 1–159 (MPNLLEKTRK…SSTVVGIQLL (159 aa)) are GAF domain. The segment at residues 207 to 226 (ASVIADRIGITRSVIVNALR) is a DNA-binding region (H-T-H motif).

This sequence belongs to the CodY family.

The protein resides in the cytoplasm. Its function is as follows. DNA-binding global transcriptional regulator which is involved in the adaptive response to starvation and acts by directly or indirectly controlling the expression of numerous genes in response to nutrient availability. During rapid exponential growth, CodY is highly active and represses genes whose products allow adaptation to nutrient depletion. The chain is Global transcriptional regulator CodY from Streptococcus pyogenes serotype M3 (strain SSI-1).